Reading from the N-terminus, the 181-residue chain is MILVVGLGNIGVEYENTRHNVGFMLIDLLLKESNFTNLTNSKFKGELFKIGSSLLLLKPSTYMNNSGLSVKAVNDFYKCERMIVIHDDIDINLGALRFKKGGSSGGHNGLKSIDTLCGNDYERVRIGVGKGENVISHVLGKFKSEEEITLSKVLEHAKKALLELIENDDLSAISSKYSLKA.

Position 14 (Tyr-14) interacts with tRNA. His-19 acts as the Proton acceptor in catalysis. 3 residues coordinate tRNA: Tyr-62, Asn-64, and Asn-108.

This sequence belongs to the PTH family. As to quaternary structure, monomer.

Its subcellular location is the cytoplasm. It catalyses the reaction an N-acyl-L-alpha-aminoacyl-tRNA + H2O = an N-acyl-L-amino acid + a tRNA + H(+). In terms of biological role, hydrolyzes ribosome-free peptidyl-tRNAs (with 1 or more amino acids incorporated), which drop off the ribosome during protein synthesis, or as a result of ribosome stalling. Its function is as follows. Catalyzes the release of premature peptidyl moieties from peptidyl-tRNA molecules trapped in stalled 50S ribosomal subunits, and thus maintains levels of free tRNAs and 50S ribosomes. In Campylobacter jejuni subsp. jejuni serotype O:2 (strain ATCC 700819 / NCTC 11168), this protein is Peptidyl-tRNA hydrolase.